The sequence spans 224 residues: Transposase for insertion sequence-like element IS431mec (224 aa).

A DNA-binding region (H-T-H motif) is located at residues 33 to 52; that stretch reads EILRERGVNVHHSTVYRWVQ. The 150-residue stretch at 73–222 folds into the Integrase catalytic domain; it reads WRIDETYIKI…SPCHEISIML (150 aa).

Functionally, involved in the transposition of the insertion sequence. This Staphylococcus aureus (strain NCTC 8325 / PS 47) protein is Transposase for insertion sequence-like element IS431mec (tnp).